A 445-amino-acid polypeptide reads, in one-letter code: Phosphoglucosamine mutase (445 aa).

The active-site Phosphoserine intermediate is the serine 102. Mg(2+)-binding residues include serine 102, aspartate 241, aspartate 243, and aspartate 245. Position 102 is a phosphoserine (serine 102).

This sequence belongs to the phosphohexose mutase family. It depends on Mg(2+) as a cofactor. In terms of processing, activated by phosphorylation.

The catalysed reaction is alpha-D-glucosamine 1-phosphate = D-glucosamine 6-phosphate. Its function is as follows. Catalyzes the conversion of glucosamine-6-phosphate to glucosamine-1-phosphate. The protein is Phosphoglucosamine mutase of Haemophilus influenzae (strain ATCC 51907 / DSM 11121 / KW20 / Rd).